The sequence spans 425 residues: Serine--tRNA ligase (425 aa).

L-serine is bound at residue 231 to 233 (TAE). 262–264 (RSE) contributes to the ATP binding site. Glu285 is a binding site for L-serine. 349–352 (EISS) is an ATP binding site. Ser385 provides a ligand contact to L-serine.

Belongs to the class-II aminoacyl-tRNA synthetase family. Type-1 seryl-tRNA synthetase subfamily. In terms of assembly, homodimer. The tRNA molecule binds across the dimer.

It is found in the cytoplasm. The catalysed reaction is tRNA(Ser) + L-serine + ATP = L-seryl-tRNA(Ser) + AMP + diphosphate + H(+). The enzyme catalyses tRNA(Sec) + L-serine + ATP = L-seryl-tRNA(Sec) + AMP + diphosphate + H(+). The protein operates within aminoacyl-tRNA biosynthesis; selenocysteinyl-tRNA(Sec) biosynthesis; L-seryl-tRNA(Sec) from L-serine and tRNA(Sec): step 1/1. Its function is as follows. Catalyzes the attachment of serine to tRNA(Ser). Is also able to aminoacylate tRNA(Sec) with serine, to form the misacylated tRNA L-seryl-tRNA(Sec), which will be further converted into selenocysteinyl-tRNA(Sec). In Alkaliphilus oremlandii (strain OhILAs) (Clostridium oremlandii (strain OhILAs)), this protein is Serine--tRNA ligase.